The sequence spans 68 residues: DNA-directed RNA polymerase subunit omega (68 aa).

This sequence belongs to the RNA polymerase subunit omega family. The RNAP catalytic core consists of 2 alpha, 1 beta, 1 beta' and 1 omega subunit. When a sigma factor is associated with the core the holoenzyme is formed, which can initiate transcription.

It carries out the reaction RNA(n) + a ribonucleoside 5'-triphosphate = RNA(n+1) + diphosphate. Functionally, promotes RNA polymerase assembly. Latches the N- and C-terminal regions of the beta' subunit thereby facilitating its interaction with the beta and alpha subunits. This chain is DNA-directed RNA polymerase subunit omega, found in Sulfurovum sp. (strain NBC37-1).